The following is a 268-amino-acid chain: Undecaprenyl-diphosphatase (268 aa).

8 consecutive transmembrane segments (helical) span residues 4-24, 50-70, 84-104, 109-129, 144-164, 184-204, 214-234, and 245-265; these read STTL…FIPV, IQLG…ISVI, AAVL…HGFI, FETP…LLFV, VPLG…VPGV, AAEF…AFDL, GALG…VLVV, and GYSL…AALL.

This sequence belongs to the UppP family.

It is found in the cell inner membrane. The catalysed reaction is di-trans,octa-cis-undecaprenyl diphosphate + H2O = di-trans,octa-cis-undecaprenyl phosphate + phosphate + H(+). Its function is as follows. Catalyzes the dephosphorylation of undecaprenyl diphosphate (UPP). Confers resistance to bacitracin. The protein is Undecaprenyl-diphosphatase of Cereibacter sphaeroides (strain ATCC 17025 / ATH 2.4.3) (Rhodobacter sphaeroides).